A 98-amino-acid polypeptide reads, in one-letter code: NADH-ubiquinone oxidoreductase chain 4L (98 aa).

3 consecutive transmembrane segments (helical) span residues 2–22 (PSIS…MLIF), 29–49 (SLLC…LTIL), and 61–81 (ILLL…LVTV).

It belongs to the complex I subunit 4L family. As to quaternary structure, core subunit of respiratory chain NADH dehydrogenase (Complex I) which is composed of 45 different subunits.

It is found in the mitochondrion inner membrane. It carries out the reaction a ubiquinone + NADH + 5 H(+)(in) = a ubiquinol + NAD(+) + 4 H(+)(out). Functionally, core subunit of the mitochondrial membrane respiratory chain NADH dehydrogenase (Complex I) which catalyzes electron transfer from NADH through the respiratory chain, using ubiquinone as an electron acceptor. Part of the enzyme membrane arm which is embedded in the lipid bilayer and involved in proton translocation. In Eulemur coronatus (Crowned lemur), this protein is NADH-ubiquinone oxidoreductase chain 4L (MT-ND4L).